The chain runs to 466 residues: E3 SUMO-protein ligase TRIM60 (466 aa).

The segment at 15–56 (CYICSDFMEDPVTSRCGHNFCFACLRLLWDDLQGNIFCPVCQ) adopts an RING-type zinc-finger fold. Residues 91-132 (EEHTVCPKHDQPLVLFCVRDRDVLCTQCSLSVEHQGHYTCPI) form a B box-type zinc finger. Zn(2+)-binding residues include Cys96, His99, Cys118, and His124. Positions 171 to 223 (LREEAQYQKIEIRYEIGQIKLFLQSEYEAHLNESHMEELRSFSELNGYLETLL) form a coiled coil. Residues 272–462 (LSLPAQYSGL…LEILTHPTPD (191 aa)) enclose the B30.2/SPRY domain.

This sequence belongs to the TRIM/RBCC family.

Its function is as follows. E3 SUMO-protein ligase that mediates SUMOylation of TAB2 leading to inhibition of NF-kappa-B and MAPK pathways by suppressing the TRAF6/TAB2/TAK1 complex. This chain is E3 SUMO-protein ligase TRIM60 (Trim60), found in Mus musculus (Mouse).